A 690-amino-acid chain; its full sequence is Protein arginine N-methyltransferase 7 (690 aa).

2 consecutive SAM-dependent MTase PRMT-type domains span residues 14–357 and 366–690; these read ENSW…YSLW and AKSV…QKKP.

This sequence belongs to the class I-like SAM-binding methyltransferase superfamily. Protein arginine N-methyltransferase family. PRMT7 subfamily.

Functionally, essential arginine methyltransferase that can both catalyze the formation of omega-N monomethylarginine (MMA) and symmetrical dimethylarginine (sDMA). Specifically mediates the symmetrical dimethylation of arginine residues in the small nuclear ribonucleoproteins SmD1 and SmD3. In Drosophila ananassae (Fruit fly), this protein is Protein arginine N-methyltransferase 7 (Art7).